Reading from the N-terminus, the 388-residue chain is S-adenosylmethionine synthase (388 aa).

Position 17 (H17) interacts with ATP. D19 is a Mg(2+) binding site. E45 lines the K(+) pocket. Residues E58 and Q102 each coordinate L-methionine. The interval 102–112 is flexible loop; the sequence is QSADIAQGVDA. ATP-binding positions include 167–169, 232–233, D241, 247–248, A264, and K268; these read DSK, RF, and RK. L-methionine is bound at residue D241. L-methionine is bound at residue K272.

The protein belongs to the AdoMet synthase family. Homotetramer; dimer of dimers. It depends on Mg(2+) as a cofactor. The cofactor is K(+).

It localises to the cytoplasm. It carries out the reaction L-methionine + ATP + H2O = S-adenosyl-L-methionine + phosphate + diphosphate. The protein operates within amino-acid biosynthesis; S-adenosyl-L-methionine biosynthesis; S-adenosyl-L-methionine from L-methionine: step 1/1. Its function is as follows. Catalyzes the formation of S-adenosylmethionine (AdoMet) from methionine and ATP. The overall synthetic reaction is composed of two sequential steps, AdoMet formation and the subsequent tripolyphosphate hydrolysis which occurs prior to release of AdoMet from the enzyme. The sequence is that of S-adenosylmethionine synthase from Paramagnetospirillum magneticum (strain ATCC 700264 / AMB-1) (Magnetospirillum magneticum).